We begin with the raw amino-acid sequence, 672 residues long: Fumonisin cluster-specific transcription factor FUM21 (672 aa).

The segment at residues 30–56 is a DNA-binding region (zn(2)-C6 fungal-type); the sequence is CESCKRRKVRCNGTNPCNQCQKSSIEC. Disordered regions lie at residues 65-111 and 190-212; these read ANDG…RFDG and KSSGPSYGMSEPPSRDSDPGFNT. Positions 77-93 are enriched in polar residues; sequence SPVQHTRGSLTPPQTSP.

Its subcellular location is the nucleus. Functionally, transcription factor that regulates the expression of the gene cluster that mediates the biosynthesis of fumonisins B1 (FB1), B2 (FB2), B3 (FB3), and B4 (FB4), which are carcinogenic mycotoxins. This Gibberella moniliformis (strain M3125 / FGSC 7600) (Maize ear and stalk rot fungus) protein is Fumonisin cluster-specific transcription factor FUM21 (FUM21).